A 333-amino-acid polypeptide reads, in one-letter code: Mitochondrial glycine transporter (333 aa).

3 Solcar repeats span residues 10-93 (SKST…IRQS), 125-209 (LSNT…GKKR), and 235-319 (HAAS…LIRR). A run of 2 helical transmembrane segments spans residues 16 to 41 (FAAG…TRVQ) and 68 to 94 (GAVP…RQSA). Residues 98 to 126 (SPLPSSSSSTTTSSSTTTSSSSSSLPKLS) form a disordered region. 4 consecutive transmembrane segments (helical) span residues 131–156 (LLAG…VRYE), 184–207 (GYGA…EQGK), 239–265 (INFA…KTRI), and 294–312 (GLAL…AWTV).

Belongs to the mitochondrial carrier (TC 2.A.29) family. SLC25A38 subfamily.

It localises to the mitochondrion inner membrane. It carries out the reaction glycine(in) = glycine(out). Mitochondrial glycine transporter that imports glycine into the mitochondrial matrix. Plays an important role in providing glycine for the first enzymatic step in heme biosynthesis, the condensation of glycine with succinyl-CoA to produce 5-aminolevulinate (ALA) in the mitochondrial matrix. The chain is Mitochondrial glycine transporter from Chaetomium globosum (strain ATCC 6205 / CBS 148.51 / DSM 1962 / NBRC 6347 / NRRL 1970) (Soil fungus).